The sequence spans 160 residues: SsrA-binding protein (160 aa).

The protein belongs to the SmpB family.

The protein localises to the cytoplasm. Functionally, required for rescue of stalled ribosomes mediated by trans-translation. Binds to transfer-messenger RNA (tmRNA), required for stable association of tmRNA with ribosomes. tmRNA and SmpB together mimic tRNA shape, replacing the anticodon stem-loop with SmpB. tmRNA is encoded by the ssrA gene; the 2 termini fold to resemble tRNA(Ala) and it encodes a 'tag peptide', a short internal open reading frame. During trans-translation Ala-aminoacylated tmRNA acts like a tRNA, entering the A-site of stalled ribosomes, displacing the stalled mRNA. The ribosome then switches to translate the ORF on the tmRNA; the nascent peptide is terminated with the 'tag peptide' encoded by the tmRNA and targeted for degradation. The ribosome is freed to recommence translation, which seems to be the essential function of trans-translation. This chain is SsrA-binding protein, found in Pectobacterium atrosepticum (strain SCRI 1043 / ATCC BAA-672) (Erwinia carotovora subsp. atroseptica).